The sequence spans 505 residues: Cytochrome P450 9b1 (505 aa).

Cys449 lines the heme pocket.

Belongs to the cytochrome P450 family. The cofactor is heme.

It is found in the endoplasmic reticulum membrane. It localises to the microsome membrane. Its function is as follows. May be involved in the metabolism of insect hormones and in the breakdown of synthetic insecticides. In Drosophila melanogaster (Fruit fly), this protein is Cytochrome P450 9b1 (Cyp9b1).